Reading from the N-terminus, the 179-residue chain is Large ribosomal subunit protein uL5 (179 aa).

Belongs to the universal ribosomal protein uL5 family. In terms of assembly, part of the 50S ribosomal subunit; part of the 5S rRNA/L5/L18/L25 subcomplex. Contacts the 5S rRNA and the P site tRNA. Forms a bridge to the 30S subunit in the 70S ribosome.

In terms of biological role, this is one of the proteins that bind and probably mediate the attachment of the 5S RNA into the large ribosomal subunit, where it forms part of the central protuberance. In the 70S ribosome it contacts protein S13 of the 30S subunit (bridge B1b), connecting the 2 subunits; this bridge is implicated in subunit movement. Contacts the P site tRNA; the 5S rRNA and some of its associated proteins might help stabilize positioning of ribosome-bound tRNAs. The chain is Large ribosomal subunit protein uL5 from Clostridium perfringens (strain ATCC 13124 / DSM 756 / JCM 1290 / NCIMB 6125 / NCTC 8237 / Type A).